We begin with the raw amino-acid sequence, 420 residues long: Acetyl-CoA acetyltransferase B, mitochondrial (420 aa).

The transit peptide at 1 to 33 (MAFCGPRTAARLSHSTRALHYTHRSFASPRTLN) directs the protein to the mitochondrion. The active-site Acyl-thioester intermediate is the cysteine 119. CoA contacts are provided by residues tyrosine 212, 251–253 (RVD), and lysine 256. Residue tyrosine 212 participates in K(+) binding. Residues alanine 273 and alanine 274 each contribute to the K(+) site. A CoA-binding site is contributed by serine 277. Valine 374 lines the K(+) pocket. The active-site Proton donor/acceptor is the cysteine 406.

This sequence belongs to the thiolase-like superfamily. Thiolase family. In terms of assembly, homotetramer.

The protein localises to the mitochondrion. It carries out the reaction 2 acetyl-CoA = acetoacetyl-CoA + CoA. The catalysed reaction is propanoyl-CoA + acetyl-CoA = 2-methyl-3-oxobutanoyl-CoA + CoA. Its pathway is lipid metabolism; fatty acid beta-oxidation. Functionally, this is one of the enzymes that catalyzes the last step of the mitochondrial beta-oxidation pathway, an aerobic process breaking down fatty acids into acetyl-CoA. Using free coenzyme A/CoA, catalyzes the thiolytic cleavage of medium- to long-chain 3-oxoacyl-CoAs into acetyl-CoA and a fatty acyl-CoA shortened by two carbon atoms. The activity of the enzyme is reversible and it can also catalyze the condensation of two acetyl-CoA molecules into acetoacetyl-CoA. Thereby, it plays a major role in ketone body metabolism. This Xenopus laevis (African clawed frog) protein is Acetyl-CoA acetyltransferase B, mitochondrial (acat1-b).